We begin with the raw amino-acid sequence, 55 residues long: Large ribosomal subunit protein bL33 (55 aa).

It belongs to the bacterial ribosomal protein bL33 family.

The chain is Large ribosomal subunit protein bL33 from Xanthobacter autotrophicus (strain ATCC BAA-1158 / Py2).